A 385-amino-acid polypeptide reads, in one-letter code: Palmitoyl-[acyl-carrier-protein] 4-desaturase, chloroplastic (385 aa).

The transit peptide at 1-36 directs the protein to the chloroplast; sequence MAMKLNALMTLQCPKRNMFTRIAPPQAGRVRSKVSM. Positions 126, 164, 167, 217, 250, and 253 each coordinate Fe cation.

Belongs to the fatty acid desaturase type 2 family. In terms of assembly, homodimer. Requires Fe(2+) as cofactor. Found only in tissues which synthesize petroselinic acid, such as developing seeds.

Its subcellular location is the plastid. The protein localises to the chloroplast. The catalysed reaction is hexadecanoyl-[ACP] + 2 reduced [2Fe-2S]-[ferredoxin] + O2 + 2 H(+) = (4Z)-hexadecenoyl-[ACP] + 2 oxidized [2Fe-2S]-[ferredoxin] + 2 H2O. Functionally, converts palmitoyl-ACP to (4Z)-hexadec-4-enoyl-ACP by introduction of a cis double bond between carbons 4 and 5 of the acyl chain. The polypeptide is Palmitoyl-[acyl-carrier-protein] 4-desaturase, chloroplastic (Coriandrum sativum (Coriander)).